A 210-amino-acid chain; its full sequence is Thymidylate kinase (210 aa).

ATP is bound at residue 11–18 (GGEGAGKT).

Belongs to the thymidylate kinase family.

It carries out the reaction dTMP + ATP = dTDP + ADP. Phosphorylation of dTMP to form dTDP in both de novo and salvage pathways of dTTP synthesis. This Halalkalibacterium halodurans (strain ATCC BAA-125 / DSM 18197 / FERM 7344 / JCM 9153 / C-125) (Bacillus halodurans) protein is Thymidylate kinase (tmk).